Here is a 430-residue protein sequence, read N- to C-terminus: MTEPDTERKGSSRRGFLAGLGAAALTGAGIGMAAGEVLRPLLPDSDPAASPEAEQRLRMAAQRADATAAPQPGISGPAPAFVHVIALDLAEEARKNPDTARDSAAAALRSWTELAARLHEESPHDIAEGAASAGLLPASLMVTVGIGGSLLSAIDAEDRRPDALADLPEFSTDDLHPRWCGGDFMLQVGAEDPMVLTAAVEELVAAAADATAVRWSLRGFRRTAAAARDPDATPRNLMGQIDGTANPAQDHPLFDRTITARPADNPAHAWMDGGSYLVVRRIRMLLTEWRKLDVAARERVIGRRLDTGAPLGSRNETDPVVLSARDEEGEPLIPENAHVRLASPENNLGARMFRRGYSYDQGWRDDGVRDAGLLFMAWQGDPATGFIPVQRSLADQGDALNRYIRHEGSALFAVPAAREGRYLGQDLIEG.

The tat-type signal signal peptide spans 1–39 (MTEPDTERKGSSRRGFLAGLGAAALTGAGIGMAAGEVLR). The segment at 42-75 (LPDSDPAASPEAEQRLRMAAQRADATAAPQPGIS) is disordered. The span at 60-69 (AAQRADATAA) shows a compositional bias: low complexity. D242 functions as the Proton acceptor in the catalytic mechanism. H338 serves as a coordination point for heme.

This sequence belongs to the DyP-type peroxidase family. Monomer. The cofactor is heme b. Post-translationally, exported by the Tat system. The position of the signal peptide cleavage has not been experimentally proven.

The protein localises to the secreted. It carries out the reaction Reactive Blue 5 + 2 H2O2 = 2,2'-disulfonyl azobenzene + 3-[(4-amino-6-chloro-1,3,5-triazin-2-yl)amino]benzenesulfonate + phthalate + 2 H2O + 2 H(+). In terms of biological role, peroxidase that is able to convert a large number of compounds, but its physiological substrate is not known. Shows high reactivity towards anthraquinone dyes (e.g. Reactive Blue 19) and a modest activity towards standard peroxidase substrates (such as guaiacol and 2,6-dimethoxyphenol) and azo dyes (e.g. Reactive Blue 5). Is also able to oxidize aromatic sulfides enantioselectively, resulting in the corresponding (R)-sulfoxides, but with a poor efficiency. Does not display catalase activity. The sequence is that of Dye-decolorizing peroxidase Tfu_3078 from Thermobifida fusca (strain YX).